Reading from the N-terminus, the 98-residue chain is Alpha-elicitin MGM-alpha (98 aa).

3 cysteine pairs are disulfide-bonded: cysteine 3/cysteine 71, cysteine 27/cysteine 56, and cysteine 51/cysteine 95.

It belongs to the elicitin family.

The protein localises to the secreted. Induces local and distal defense responses (incompatible hypersensitive reaction) in plants from the solanaceae and cruciferae families. Elicits leaf necrosis and causes the accumulation of pathogenesis-related proteins. Might interact with the lipidic molecules of the plasma membrane. In Phytophthora megasperma (Potato pink rot fungus), this protein is Alpha-elicitin MGM-alpha.